Consider the following 255-residue polypeptide: 5-oxoprolinase subunit A 2 (255 aa).

This sequence belongs to the LamB/PxpA family. Forms a complex composed of PxpA, PxpB and PxpC.

It catalyses the reaction 5-oxo-L-proline + ATP + 2 H2O = L-glutamate + ADP + phosphate + H(+). Its function is as follows. Catalyzes the cleavage of 5-oxoproline to form L-glutamate coupled to the hydrolysis of ATP to ADP and inorganic phosphate. The sequence is that of 5-oxoprolinase subunit A 2 from Agrobacterium fabrum (strain C58 / ATCC 33970) (Agrobacterium tumefaciens (strain C58)).